A 30-amino-acid chain; its full sequence is Snake venom serine protease (30 aa).

Residues 1–30 enclose the Peptidase S1 domain; the sequence is VIGGDECNINEHRFLVALYDPDGFLSGGIL.

This sequence belongs to the peptidase S1 family. Snake venom subfamily. Monomer. In terms of processing, N-Glycosylated. As to expression, expressed by the venom gland.

Its subcellular location is the secreted. Inhibited by diisopropylfluorophosphate (DFP). In terms of biological role, snake venom serine protease that catalyzes the hydrolysis of arginine esters, kallikrein substrates Pro-Phe-Arg-MCA and Z-Phe-Arg-MCA. Cleaves kininogen analogs to release bradykinin. Induces contraction of the isolated rat uterus directly at high concentrations, but provokes more forceful contractions when injected in presence of bovine plasma. Shows capillary permeability-increasing activity and hypotensive activity on the anesthetized rat. This Crotalus viridis viridis (Prairie rattlesnake) protein is Snake venom serine protease.